Reading from the N-terminus, the 236-residue chain is Orotidine 5'-phosphate decarboxylase (236 aa).

Residues Asp-14, Lys-36, 63 to 72, Thr-123, Arg-184, Gln-193, Gly-213, and Arg-214 contribute to the substrate site; that span reads DLKFHDIPNT. The Proton donor role is filled by Lys-65.

The protein belongs to the OMP decarboxylase family. Type 1 subfamily. In terms of assembly, homodimer.

It catalyses the reaction orotidine 5'-phosphate + H(+) = UMP + CO2. The protein operates within pyrimidine metabolism; UMP biosynthesis via de novo pathway; UMP from orotate: step 2/2. In terms of biological role, catalyzes the decarboxylation of orotidine 5'-monophosphate (OMP) to uridine 5'-monophosphate (UMP). The polypeptide is Orotidine 5'-phosphate decarboxylase (Marinobacter nauticus (strain ATCC 700491 / DSM 11845 / VT8) (Marinobacter aquaeolei)).